The primary structure comprises 506 residues: MSIVILDFGSQFTRLITRRFRELGAYSVILPGTASLERIQQENPQGIVLSGGPSSVYDEGAPRPAPGVLDLNVPILGVCYGMQYLAHEAGGDVKRAGKREYGKADLTEYGGRLFEGIQGEFVAWMSHSDSVTQLPQGYQVVARTEHTPVTAIENNDTRRYGVQFHPEVVHTPKGGQMLANFLDICGVTRDWNAEHIVDELIEGVRAQVGDTGRVLLGISGGVDSSTLALLLAKAVGERLTAVFIDHGLLRLGEREQVEAALTPLGVNLVTVDAKDEFLGQLAGVSDPEQKRKIIGREFIRAFERETAKLGDFEFLAQGTLYPDVIESAGGEGAANIKSHHNVGGLPDDVQFKLVEPFRTLFKDEVREIARLLGLPDHIRMRHPFPGPGLAIRCLGEVTAEKVDILQRVDDIFISGLREFGLYDGCSQALAVLTPIQSVGVMGDERTYSYTAALRAVTTDDFMTAEWARLPYDFLATMSNRIVNQVHEINRVVYDITGKPPATIEWE.

In terms of domain architecture, Glutamine amidotransferase type-1 spans 2 to 190 (SIVILDFGSQ…FLDICGVTRD (189 aa)). C79 (nucleophile) is an active-site residue. Catalysis depends on residues H165 and E167. Residues 191 to 381 (WNAEHIVDEL…LGLPDHIRMR (191 aa)) enclose the GMPS ATP-PPase domain. 219-225 (SGGVDSS) is an ATP binding site.

In terms of assembly, homodimer.

It catalyses the reaction XMP + L-glutamine + ATP + H2O = GMP + L-glutamate + AMP + diphosphate + 2 H(+). Its pathway is purine metabolism; GMP biosynthesis; GMP from XMP (L-Gln route): step 1/1. Functionally, catalyzes the synthesis of GMP from XMP. This is GMP synthase [glutamine-hydrolyzing] (guaA) from Deinococcus radiodurans (strain ATCC 13939 / DSM 20539 / JCM 16871 / CCUG 27074 / LMG 4051 / NBRC 15346 / NCIMB 9279 / VKM B-1422 / R1).